Consider the following 369-residue polypeptide: UDP-3-O-acylglucosamine N-acyltransferase (369 aa).

The Proton acceptor role is filled by His263.

This sequence belongs to the transferase hexapeptide repeat family. LpxD subfamily. As to quaternary structure, homotrimer.

The catalysed reaction is a UDP-3-O-[(3R)-3-hydroxyacyl]-alpha-D-glucosamine + a (3R)-hydroxyacyl-[ACP] = a UDP-2-N,3-O-bis[(3R)-3-hydroxyacyl]-alpha-D-glucosamine + holo-[ACP] + H(+). Its pathway is bacterial outer membrane biogenesis; LPS lipid A biosynthesis. In terms of biological role, catalyzes the N-acylation of UDP-3-O-acylglucosamine using 3-hydroxyacyl-ACP as the acyl donor. Is involved in the biosynthesis of lipid A, a phosphorylated glycolipid that anchors the lipopolysaccharide to the outer membrane of the cell. The polypeptide is UDP-3-O-acylglucosamine N-acyltransferase (Burkholderia ambifaria (strain MC40-6)).